We begin with the raw amino-acid sequence, 109 residues long: Spermidine export protein MdtI (109 aa).

Transmembrane regions (helical) follow at residues 6–26 (WVHA…NVFL), 36–56 (IFGL…SQAV), 64–84 (AYAL…WILF), and 88–108 (LNRK…MVKL).

It belongs to the drug/metabolite transporter (DMT) superfamily. Small multidrug resistance (SMR) (TC 2.A.7.1) family. MdtI subfamily. Forms a complex with MdtJ.

The protein localises to the cell inner membrane. Catalyzes the excretion of spermidine. The polypeptide is Spermidine export protein MdtI (Shigella dysenteriae serotype 1 (strain Sd197)).